Consider the following 234-residue polypeptide: DNA repair protein RecO (234 aa).

The protein belongs to the RecO family.

Its function is as follows. Involved in DNA repair and RecF pathway recombination. This chain is DNA repair protein RecO, found in Coxiella burnetii (strain RSA 331 / Henzerling II).